Here is a 294-residue protein sequence, read N- to C-terminus: 33 kDa chaperonin (294 aa).

2 disulfides stabilise this stretch: Cys-239–Cys-241 and Cys-272–Cys-275.

The protein belongs to the HSP33 family. Post-translationally, under oxidizing conditions two disulfide bonds are formed involving the reactive cysteines. Under reducing conditions zinc is bound to the reactive cysteines and the protein is inactive.

The protein resides in the cytoplasm. In terms of biological role, redox regulated molecular chaperone. Protects both thermally unfolding and oxidatively damaged proteins from irreversible aggregation. Plays an important role in the bacterial defense system toward oxidative stress. In Lacticaseibacillus paracasei (strain ATCC 334 / BCRC 17002 / CCUG 31169 / CIP 107868 / KCTC 3260 / NRRL B-441) (Lactobacillus paracasei), this protein is 33 kDa chaperonin.